A 229-amino-acid chain; its full sequence is Aminodeoxyfutalosine nucleosidase (229 aa).

Residue Glu13 is the Proton acceptor of the active site. Residues Gly79, Ile153, and 173-174 each bind substrate; that span reads ME. The active-site Proton donor is Asp197.

Belongs to the PNP/UDP phosphorylase family. As to quaternary structure, homodimer.

The catalysed reaction is 6-amino-6-deoxyfutalosine + H2O = dehypoxanthine futalosine + adenine. It catalyses the reaction S-adenosyl-L-homocysteine + H2O = S-(5-deoxy-D-ribos-5-yl)-L-homocysteine + adenine. It carries out the reaction S-methyl-5'-thioadenosine + H2O = 5-(methylsulfanyl)-D-ribose + adenine. The enzyme catalyses 5'-deoxyadenosine + H2O = 5-deoxy-D-ribose + adenine. Its pathway is quinol/quinone metabolism; menaquinone biosynthesis. It participates in amino-acid biosynthesis; L-methionine biosynthesis via salvage pathway; S-methyl-5-thio-alpha-D-ribose 1-phosphate from S-methyl-5'-thioadenosine (hydrolase route): step 1/2. Functionally, catalyzes the direct conversion of aminodeoxyfutalosine (AFL) into dehypoxanthine futalosine (DHFL) and adenine via the hydrolysis of the N-glycosidic bond; this reaction seems to represent an essential step in the menaquinone biosynthesis pathway in Campylobacter species. Also catalyzes the hydrolysis of 5'-methylthioadenosine (MTA) to adenine and 5'-methylthioribose. Can also probably use S-adenosylhomocysteine (SAH) as substrate, leading to adenine and S-ribosylhomocysteine. These other activities highlight the tremendous versatility of the enzyme, which also plays key roles in S-adenosylmethionine recycling and in the biosynthesis of the quorum-sensing molecule autoinducer-2. Shows negligible activity with futalosine (FL) as substrate. The chain is Aminodeoxyfutalosine nucleosidase (pfs) from Campylobacter jejuni subsp. jejuni serotype O:2 (strain ATCC 700819 / NCTC 11168).